The sequence spans 207 residues: 3-demethoxyubiquinol 3-hydroxylase (207 aa).

Fe cation contacts are provided by E56, E86, H89, E138, E170, and H173.

It belongs to the COQ7 family. Fe cation is required as a cofactor.

It localises to the cell membrane. It carries out the reaction a 5-methoxy-2-methyl-3-(all-trans-polyprenyl)benzene-1,4-diol + AH2 + O2 = a 3-demethylubiquinol + A + H2O. It participates in cofactor biosynthesis; ubiquinone biosynthesis. In terms of biological role, catalyzes the hydroxylation of 2-nonaprenyl-3-methyl-6-methoxy-1,4-benzoquinol during ubiquinone biosynthesis. The polypeptide is 3-demethoxyubiquinol 3-hydroxylase (Dechloromonas aromatica (strain RCB)).